The primary structure comprises 2415 residues: Spectrin alpha chain, erythrocytic 1 (2415 aa).

Spectrin repeat units lie at residues 52–152 (YHYQ…SDVL), 157–259 (KFYQ…ESLS), 263–365 (DLQR…AKLK), 370–471 (YHRF…HQYR), 475–576 (DFHL…RKLL), 580–681 (QLLQ…GTQL), 686–787 (QLLQ…KKKL), 792–894 (KLQQ…NDLK), and 898–967 (QLQQ…QQQQ). The residue at position 257 (serine 257) is a Phosphoserine. One can recognise an SH3 domain in the interval 975–1034 (GREARVIALYDFEARSRREVSMKKNDVLTLLSSINKDWWKVEADDHQGFVPAVYVRKLAP). Serine 990 bears the Phosphoserine mark. 11 Spectrin repeats span residues 1085–1177 (LAYE…YQLL), 1183–1285 (VEMF…SLNE), 1287–1390 (HKFF…KMLD), 1394–1489 (ELQL…QLLT), 1499–1603 (DLKQ…KLNE), 1606–1709 (RQQR…KLKE), 1712–1815 (ALFQ…NLEE), 1818–1921 (EYLQ…SQLD), 1924–2029 (HAFQ…KLLE), 2040–2142 (LFME…QELQ), and 2154–2254 (MCQE…NLEQ). Serine 1972 is modified (phosphoserine). EF-hand domains are found at residues 2267 to 2302 (ETLK…LNYY), 2310 to 2345 (EPEP…KESE), and 2347 to 2382 (IKTS…EQVS). The Ca(2+) site is built by aspartate 2280, asparagine 2282, threonine 2284, arginine 2286, glutamate 2291, aspartate 2323, tyrosine 2329, and aspartate 2334.

It belongs to the spectrin family. Composed of non-homologous chains, alpha and beta, which aggregate to form dimers, tetramers, and higher polymers. Interacts with FASLG. Interacts with BCAM.

The protein resides in the cytoplasm. The protein localises to the cytoskeleton. Its subcellular location is the cell cortex. In terms of biological role, spectrin is the major constituent of the cytoskeletal network underlying the erythrocyte plasma membrane. It associates with band 4.1 and actin to form the cytoskeletal superstructure of the erythrocyte plasma membrane. The protein is Spectrin alpha chain, erythrocytic 1 (Spta1) of Mus musculus (Mouse).